Here is a 185-residue protein sequence, read N- to C-terminus: Large ribosomal subunit protein eL19 (185 aa).

A disordered region spans residues serine 152 to valine 185.

It belongs to the eukaryotic ribosomal protein eL19 family.

This chain is Large ribosomal subunit protein eL19 (RPL19), found in Tetrahymena thermophila (strain SB210).